Here is a 636-residue protein sequence, read N- to C-terminus: Interleukin-27 receptor subunit alpha (636 aa).

An N-terminal signal peptide occupies residues 1-32 (MRGGRGAPFWLWPLPKLALLPLLWVLFQRTRP). Residues 33-516 (QGSAGPLQCY…HLPDNTLRWK (484 aa)) lie on the Extracellular side of the membrane. Residues asparagine 51 and asparagine 76 are each glycosylated (N-linked (GlcNAc...) asparagine). Positions 131–231 (PRLGPDVDFS…PILSFQTPPS (101 aa)) constitute a Fibronectin type-III 1 domain. Positions 217–221 (WGEWS) match the WSXWS motif motif. N-linked (GlcNAc...) asparagine glycans are attached at residues asparagine 302, asparagine 311, asparagine 374, asparagine 382, and asparagine 467. 2 consecutive Fibronectin type-III domains span residues 322 to 417 (APRS…LAPL) and 419 to 511 (GPTL…LPDN). A helical transmembrane segment spans residues 517-537 (VLPGILFLWGLFLLGCGLSLA). The Cytoplasmic portion of the chain corresponds to 538 to 636 (TSGRCYHLRH…LGPPRPQVLA (99 aa)). The Box 1 motif signature appears at 554 to 562 (VWEKVPDPA). Residues 587–636 (EVEEMEPPPVMESSQPAQATAPLDSGYEKHFLPTPEELGLLGPPRPQVLA) are disordered. Low complexity predominate over residues 618–628 (LPTPEELGLLG).

Belongs to the type I cytokine receptor family. Type 2 subfamily. Component of a receptor complex composed of IL6ST/GP130, IL27RA/WSX1 and CNTFR which interacts with the neuroprotective peptide humanin. Highly expressed in lymphoid tissues such as spleen, lymph nodes and peripheral blood leukocytes. Weakly expressed in other tissues examined including heart, brain, fetal and adult lung, liver, skeletal muscle, kidney, pancreas, prostate, testis, ovary, small intestine, kidney and colon. In the lymphoid system, higher level expression in CD4+ T-cell subsets than in CD8+ T-cell subsets. Also weaker expression in CD19+ B-cells and monocytes.

It localises to the membrane. Functionally, receptor for IL27. Requires IL6ST/GP130 to mediate signal transduction in response to IL27. This signaling system acts through STAT3 and STAT1. Acts as a receptor for the neuroprotective peptide humanin as part of a complex with IL6ST/GP130 and CNTFR. Involved in the regulation of Th1-type immune responses. Also appears to be involved in innate defense mechanisms. This Homo sapiens (Human) protein is Interleukin-27 receptor subunit alpha (IL27RA).